The sequence spans 100 residues: MKLTPRERDKLLIFTAALLAERRRARGLKLNYPEAVALITAALMEAARDGKTVAEVMHYGTTLLTRDDVMEGVPEMIPDIQVEATFPDGTKLVTVHHPIP.

The protein belongs to the urease gamma subunit family. In terms of assembly, heterotrimer of UreA (gamma), UreB (beta) and UreC (alpha) subunits. Three heterotrimers associate to form the active enzyme.

The protein resides in the cytoplasm. It catalyses the reaction urea + 2 H2O + H(+) = hydrogencarbonate + 2 NH4(+). It participates in nitrogen metabolism; urea degradation; CO(2) and NH(3) from urea (urease route): step 1/1. The protein is Urease subunit gamma of Paraburkholderia phymatum (strain DSM 17167 / CIP 108236 / LMG 21445 / STM815) (Burkholderia phymatum).